Here is a 312-residue protein sequence, read N- to C-terminus: Malate dehydrogenase (312 aa).

NAD(+)-binding positions include 7 to 13 (GASGGIG) and Asp34. 2 residues coordinate substrate: Arg81 and Arg87. NAD(+) is bound by residues Asn94 and 117-119 (ITN). The substrate site is built by Asn119 and Arg153. His177 (proton acceptor) is an active-site residue. Met227 provides a ligand contact to NAD(+).

Belongs to the LDH/MDH superfamily. MDH type 1 family. In terms of assembly, homodimer.

It catalyses the reaction (S)-malate + NAD(+) = oxaloacetate + NADH + H(+). Its function is as follows. Catalyzes the reversible oxidation of malate to oxaloacetate. In Actinobacillus succinogenes (strain ATCC 55618 / DSM 22257 / CCUG 43843 / 130Z), this protein is Malate dehydrogenase.